Here is a 320-residue protein sequence, read N- to C-terminus: Nucleotide-binding protein Acid_7395 (320 aa).

The interval 1-34 is disordered; that stretch reads MPLRKKGAATTKAAATRKDSAKAPASSKRKDAPQ. 44-51 provides a ligand contact to ATP; sequence GLSGSGKG. 94–97 provides a ligand contact to GTP; sequence DIRE.

Belongs to the RapZ-like family.

In terms of biological role, displays ATPase and GTPase activities. The chain is Nucleotide-binding protein Acid_7395 from Solibacter usitatus (strain Ellin6076).